The sequence spans 381 residues: Bifunctional polyhydroxybutyrate synthase / ABC transporter periplasmic binding protein (381 aa).

A signal peptide spans Met-1 to Ala-22.

Belongs to the bacterial solute-binding protein PotD/PotF family.

The protein localises to the periplasm. The catalysed reaction is (3R)-3-hydroxybutanoyl-CoA + [(3R)-hydroxybutanoate](n) = [(3R)-hydroxybutanoate](n+1) + CoA. Its function is as follows. Catalyzes the formation of short polymers of R-3-hydroxybutyrate (cPHB). Involved in natural transformation. Probably part of the ABC transporter complex YdcSTUV. During natural transformation, may bind dsDNA and convey it to the inner membrane channel formed by YdcV. The protein is Bifunctional polyhydroxybutyrate synthase / ABC transporter periplasmic binding protein (ydcS) of Escherichia coli (strain K12).